Here is a 445-residue protein sequence, read N- to C-terminus: Phosphoglucosamine mutase (445 aa).

Serine 102 (phosphoserine intermediate) is an active-site residue. Residues serine 102, aspartate 241, aspartate 243, and aspartate 245 each contribute to the Mg(2+) site. Serine 102 is modified (phosphoserine).

It belongs to the phosphohexose mutase family. Mg(2+) serves as cofactor. Activated by phosphorylation.

It catalyses the reaction alpha-D-glucosamine 1-phosphate = D-glucosamine 6-phosphate. Catalyzes the conversion of glucosamine-6-phosphate to glucosamine-1-phosphate. This Escherichia coli (strain 55989 / EAEC) protein is Phosphoglucosamine mutase.